Reading from the N-terminus, the 232-residue chain is Small ribosomal subunit protein uS3 (232 aa).

Residues Ile-39 to Arg-107 enclose the KH type-2 domain.

It belongs to the universal ribosomal protein uS3 family. As to quaternary structure, part of the 30S ribosomal subunit. Forms a tight complex with proteins S10 and S14.

Functionally, binds the lower part of the 30S subunit head. Binds mRNA in the 70S ribosome, positioning it for translation. The protein is Small ribosomal subunit protein uS3 of Rhodopseudomonas palustris (strain BisB18).